The following is a 138-amino-acid chain: Basic phospholipase A2 homolog Ts-K49a (138 aa).

Residues 1–16 (MRTLWIMAVLLLGVEG) form the signal peptide. 7 disulfide bridges follow: C42-C131, C44-C60, C59-C111, C65-C138, C66-C104, C73-C97, and C91-C102. The important for membrane-damaging activities in eukaryotes and bacteria; heparin-binding stretch occupies residues 121–133 (KKKKINLKLFCKK).

In terms of tissue distribution, expressed by the venom gland.

The protein resides in the secreted. In terms of biological role, snake venom phospholipase A2 homolog that lacks catalytic activity. It shows myotoxic and weak anticoagulant activities and induces local edema a few hours after injection (5-10 ug) in the hind paw. A model of myotoxic mechanism has been proposed: an apo Lys49-PLA2 is activated by the entrance of a hydrophobic molecule (e.g. fatty acid) at the hydrophobic channel of the protein leading to a reorientation of a monomer. This reorientation causes a transition between 'inactive' to 'active' states, causing alignment of C-terminal and membrane-docking sites (MDoS) side-by-side and putting the membrane-disruption sites (MDiS) in the same plane, exposed to solvent and in a symmetric position for both monomers. The MDoS region stabilizes the toxin on membrane by the interaction of charged residues with phospholipid head groups. Subsequently, the MDiS region destabilizes the membrane with penetration of hydrophobic residues. This insertion causes a disorganization of the membrane, allowing an uncontrolled influx of ions (i.e. calcium and sodium), and eventually triggering irreversible intracellular alterations and cell death. The sequence is that of Basic phospholipase A2 homolog Ts-K49a from Trimeresurus stejnegeri (Chinese green tree viper).